Here is a 433-residue protein sequence, read N- to C-terminus: Enolase (433 aa).

A (2R)-2-phosphoglycerate-binding site is contributed by Gln167. Residue Glu209 is the Proton donor of the active site. Mg(2+) is bound by residues Asp246, Glu291, and Asp318. (2R)-2-phosphoglycerate contacts are provided by Lys343, Arg372, Ser373, and Lys394. Catalysis depends on Lys343, which acts as the Proton acceptor.

This sequence belongs to the enolase family. In terms of assembly, component of the RNA degradosome, a multiprotein complex involved in RNA processing and mRNA degradation. The cofactor is Mg(2+).

The protein localises to the cytoplasm. The protein resides in the secreted. It is found in the cell surface. It catalyses the reaction (2R)-2-phosphoglycerate = phosphoenolpyruvate + H2O. Its pathway is carbohydrate degradation; glycolysis; pyruvate from D-glyceraldehyde 3-phosphate: step 4/5. In terms of biological role, catalyzes the reversible conversion of 2-phosphoglycerate (2-PG) into phosphoenolpyruvate (PEP). It is essential for the degradation of carbohydrates via glycolysis. The chain is Enolase from Actinobacillus succinogenes (strain ATCC 55618 / DSM 22257 / CCUG 43843 / 130Z).